A 427-amino-acid chain; its full sequence is Inorganic pyrophosphatase 1 (427 aa).

A compositionally biased stretch (low complexity) spans serine 36 to serine 52. 2 disordered regions span residues serine 36–proline 63 and serine 77–histidine 118. Polar residues-rich tracts occupy residues glutamine 53 to proline 63 and serine 77 to glutamate 114. Mg(2+) contacts are provided by aspartate 259, aspartate 264, and aspartate 296.

The protein belongs to the PPase family. It depends on Mg(2+) as a cofactor. As to expression, expressed in coelomocytes, the intestine and in the nervous system including the nerve cords and sensory neurons.

The protein resides in the cytoplasm. It carries out the reaction diphosphate + H2O = 2 phosphate + H(+). Catalyzes the hydrolysis of inorganic pyrophosphate (PPi) forming two phosphate ions. Plays a role in intestinal development and subsequent normal secretory, digestive and absorption functions. Required for larval development. In Caenorhabditis elegans, this protein is Inorganic pyrophosphatase 1.